The primary structure comprises 124 residues: Cytochrome c2 (124 aa).

At Gln1 the chain carries Pyrrolidone carboxylic acid. The heme c site is built by Cys15, Cys18, His19, and Met100.

Binds 1 heme c group covalently per subunit.

It localises to the periplasm. In terms of biological role, cytochrome c2 is found mainly in purple, non-sulfur, photosynthetic bacteria where it functions as the electron donor to the oxidized bacteriochlorophyll in the photophosphorylation pathway. However, it may also have a role in the respiratory chain and is found in some non-photosynthetic bacteria. The sequence is that of Cytochrome c2 (cycA) from Cereibacter sphaeroides (Rhodobacter sphaeroides).